The sequence spans 203 residues: Orotate phosphoribosyltransferase (203 aa).

5-phospho-alpha-D-ribose 1-diphosphate is bound by residues arginine 94, lysine 98, histidine 100, and 120-128; that span reads EDLISTGGS. Serine 124 serves as a coordination point for orotate.

The protein belongs to the purine/pyrimidine phosphoribosyltransferase family. PyrE subfamily. As to quaternary structure, homodimer. Requires Mg(2+) as cofactor.

It carries out the reaction orotidine 5'-phosphate + diphosphate = orotate + 5-phospho-alpha-D-ribose 1-diphosphate. It participates in pyrimidine metabolism; UMP biosynthesis via de novo pathway; UMP from orotate: step 1/2. Functionally, catalyzes the transfer of a ribosyl phosphate group from 5-phosphoribose 1-diphosphate to orotate, leading to the formation of orotidine monophosphate (OMP). The polypeptide is Orotate phosphoribosyltransferase (Staphylococcus aureus (strain COL)).